A 261-amino-acid chain; its full sequence is Ribosomal RNA small subunit methyltransferase A (261 aa).

Residues His-12, Leu-14, Gly-39, Glu-60, Asp-81, and Asn-104 each coordinate S-adenosyl-L-methionine.

This sequence belongs to the class I-like SAM-binding methyltransferase superfamily. rRNA adenine N(6)-methyltransferase family. RsmA subfamily.

The protein localises to the cytoplasm. The enzyme catalyses adenosine(1518)/adenosine(1519) in 16S rRNA + 4 S-adenosyl-L-methionine = N(6)-dimethyladenosine(1518)/N(6)-dimethyladenosine(1519) in 16S rRNA + 4 S-adenosyl-L-homocysteine + 4 H(+). Specifically dimethylates two adjacent adenosines (A1518 and A1519) in the loop of a conserved hairpin near the 3'-end of 16S rRNA in the 30S particle. May play a critical role in biogenesis of 30S subunits. This Albidiferax ferrireducens (strain ATCC BAA-621 / DSM 15236 / T118) (Rhodoferax ferrireducens) protein is Ribosomal RNA small subunit methyltransferase A.